The chain runs to 562 residues: Putative transport protein NT01EI_2530 (562 aa).

Helical transmembrane passes span 8-28 (LLTG…LCLG), 32-52 (LGSI…LLGQ), 66-86 (FMLF…SIFF), 94-114 (MLAL…GKLF), 118-138 (IGLT…LVGA), and 158-178 (HLSL…IFGA). 2 consecutive RCK C-terminal domains span residues 202–288 (LDND…SFRN) and 290–373 (KEVF…RIGF). Transmembrane regions (helical) follow at residues 383-403 (LLAF…TFQF), 406-426 (FSFG…LGFL), 443-463 (MVKE…AGAG), 477-497 (IAGL…GAFV), and 541-561 (IANV…PGVV).

This sequence belongs to the AAE transporter (TC 2.A.81) family. YbjL subfamily.

The protein localises to the cell membrane. This is Putative transport protein NT01EI_2530 from Edwardsiella ictaluri (strain 93-146).